We begin with the raw amino-acid sequence, 190 residues long: CD70 antigen (190 aa).

Over 1–17 (MEEEGSGCNVPRLPWAS) the chain is Cytoplasmic. A helical membrane pass occupies residues 18 to 38 (ILRAALLLLLIGMVIYCFLCG). Residues 39-190 (QRFTQQQLDS…TFFGVQLVRP (152 aa)) are Extracellular-facing. One can recognise a THD domain in the interval 52 to 188 (DLAELLLNHT…DETFFGVQLV (137 aa)). 2 N-linked (GlcNAc...) asparagine glycosylation sites follow: N59 and N110. Cystine bridges form between C111/C148 and C130/C165. N-linked (GlcNAc...) asparagine glycosylation is present at N167.

This sequence belongs to the tumor necrosis factor family. As to quaternary structure, homotrimer. Post-translationally, N-glycosylated.

It is found in the cell membrane. Functionally, expressed at the plasma membrane of B cells, it is the ligand of the CD27 receptor which is specifically expressed at the surface of T cells. The CD70-CD27 signaling pathway mediates antigen-specific T cell activation and expansion which in turn provides immune surveillance of B cells. The protein is CD70 antigen of Sus scrofa (Pig).